The chain runs to 165 residues: Transcription antitermination protein NusB (165 aa).

The tract at residues 1 to 27 (MISDDTDQFNPRDAKSPEIAKGKSAKR) is disordered. The span at 10-21 (NPRDAKSPEIAK) shows a compositional bias: basic and acidic residues.

This sequence belongs to the NusB family.

Involved in transcription antitermination. Required for transcription of ribosomal RNA (rRNA) genes. Binds specifically to the boxA antiterminator sequence of the ribosomal RNA (rrn) operons. The polypeptide is Transcription antitermination protein NusB (Pseudomonas syringae pv. tomato (strain ATCC BAA-871 / DC3000)).